Here is a 330-residue protein sequence, read N- to C-terminus: Malate dehydrogenase (330 aa).

12–18 lines the NAD(+) pocket; the sequence is GAAGQIG. Substrate contacts are provided by arginine 93 and arginine 99. Residues asparagine 106, glutamine 113, and 130-132 contribute to the NAD(+) site; that span reads VGN. Residues asparagine 132 and arginine 166 each coordinate substrate. Histidine 191 (proton acceptor) is an active-site residue.

The protein belongs to the LDH/MDH superfamily. MDH type 2 family.

The enzyme catalyses (S)-malate + NAD(+) = oxaloacetate + NADH + H(+). Functionally, catalyzes the reversible oxidation of malate to oxaloacetate. In Azoarcus sp. (strain BH72), this protein is Malate dehydrogenase.